The sequence spans 270 residues: Tetraspanin-17 (270 aa).

The Cytoplasmic portion of the chain corresponds to 1–19 (MPGKHQQFQDPEVGCCGKY). A helical membrane pass occupies residues 20–40 (FLFGFNIVFWVLGALFLAIGL). At 41–63 (WAWGEKGVLSNISALTDLGGLDP) the chain is on the extracellular side. N-linked (GlcNAc...) asparagine glycosylation occurs at Asn-51. A helical transmembrane segment spans residues 64–84 (VWLFVVVGGVMSVLGFAGCIG). Residues 85-94 (ALRENTFLLK) lie on the Cytoplasmic side of the membrane. The chain crosses the membrane as a helical span at residues 95–115 (FFSVFLGLIFFLELAAGILAF). Residues 116–234 (VFKDWIRDQL…GQFEKWLQDN (119 aa)) lie on the Extracellular side of the membrane. 4 disulfides stabilise this stretch: Cys-155–Cys-223, Cys-156–Cys-188, Cys-172–Cys-182, and Cys-189–Cys-202. Residue Asn-171 is glycosylated (N-linked (GlcNAc...) asparagine). Residues 235–255 (LIVVAGVLVGIALLQIFGLCL) form a helical membrane-spanning segment. The Cytoplasmic portion of the chain corresponds to 256-270 (AQNLVSDIKAVKANW).

This sequence belongs to the tetraspanin (TM4SF) family. Interacts with ADAM10; the interaction influences ADAM10 substrate specificity, endocytosis and turnover.

The protein localises to the cell membrane. Part of TspanC8 subgroup, composed of 6 members that interact with the transmembrane metalloprotease ADAM10. This interaction is required for ADAM10 exit from the endoplasmic reticulum and for enzymatic maturation and trafficking to the cell surface as well as substrate specificity. Different TspanC8/ADAM10 complexes have distinct substrates. Seems to regulate VE-cadherin expression in endothelial cells probably through interaction with ADAM10, promoting leukocyte transmigration. This Mus musculus (Mouse) protein is Tetraspanin-17 (Tspan17).